A 227-amino-acid chain; its full sequence is Cytochrome c oxidase subunit 2 (227 aa).

Residues 1-14 (MAHPLQLGLQDASS) lie on the Mitochondrial intermembrane side of the membrane. The chain crosses the membrane as a helical span at residues 15 to 45 (PIMEELLYFHDHALMIVFLISSLVLYTISLM). Topologically, residues 46–59 (LTTKLMHTSTMNAQ) are mitochondrial matrix. Residues 60–87 (MVETMWTILPAVILTSIALPSLRILYMT) form a helical membrane-spanning segment. Over 88–227 (DEINNPLLTI…HFETWSTLTS (140 aa)) the chain is Mitochondrial intermembrane. Cu cation-binding residues include His-161, Cys-196, Glu-198, Cys-200, His-204, and Met-207. Glu-198 contacts Mg(2+).

Belongs to the cytochrome c oxidase subunit 2 family. As to quaternary structure, component of the cytochrome c oxidase (complex IV, CIV), a multisubunit enzyme composed of 14 subunits. The complex is composed of a catalytic core of 3 subunits MT-CO1, MT-CO2 and MT-CO3, encoded in the mitochondrial DNA, and 11 supernumerary subunits COX4I, COX5A, COX5B, COX6A, COX6B, COX6C, COX7A, COX7B, COX7C, COX8 and NDUFA4, which are encoded in the nuclear genome. The complex exists as a monomer or a dimer and forms supercomplexes (SCs) in the inner mitochondrial membrane with NADH-ubiquinone oxidoreductase (complex I, CI) and ubiquinol-cytochrome c oxidoreductase (cytochrome b-c1 complex, complex III, CIII), resulting in different assemblies (supercomplex SCI(1)III(2)IV(1) and megacomplex MCI(2)III(2)IV(2)). Found in a complex with TMEM177, COA6, COX18, COX20, SCO1 and SCO2. Interacts with TMEM177 in a COX20-dependent manner. Interacts with COX20. Interacts with COX16. It depends on Cu cation as a cofactor.

It is found in the mitochondrion inner membrane. It carries out the reaction 4 Fe(II)-[cytochrome c] + O2 + 8 H(+)(in) = 4 Fe(III)-[cytochrome c] + 2 H2O + 4 H(+)(out). Functionally, component of the cytochrome c oxidase, the last enzyme in the mitochondrial electron transport chain which drives oxidative phosphorylation. The respiratory chain contains 3 multisubunit complexes succinate dehydrogenase (complex II, CII), ubiquinol-cytochrome c oxidoreductase (cytochrome b-c1 complex, complex III, CIII) and cytochrome c oxidase (complex IV, CIV), that cooperate to transfer electrons derived from NADH and succinate to molecular oxygen, creating an electrochemical gradient over the inner membrane that drives transmembrane transport and the ATP synthase. Cytochrome c oxidase is the component of the respiratory chain that catalyzes the reduction of oxygen to water. Electrons originating from reduced cytochrome c in the intermembrane space (IMS) are transferred via the dinuclear copper A center (CU(A)) of subunit 2 and heme A of subunit 1 to the active site in subunit 1, a binuclear center (BNC) formed by heme A3 and copper B (CU(B)). The BNC reduces molecular oxygen to 2 water molecules using 4 electrons from cytochrome c in the IMS and 4 protons from the mitochondrial matrix. This Galeopterus variegatus (Malayan flying lemur) protein is Cytochrome c oxidase subunit 2 (MT-CO2).